A 344-amino-acid polypeptide reads, in one-letter code: Phenylalanine--tRNA ligase alpha subunit (344 aa).

Glutamate 255 provides a ligand contact to Mg(2+).

This sequence belongs to the class-II aminoacyl-tRNA synthetase family. Phe-tRNA synthetase alpha subunit type 1 subfamily. In terms of assembly, tetramer of two alpha and two beta subunits. Mg(2+) is required as a cofactor.

The protein localises to the cytoplasm. It catalyses the reaction tRNA(Phe) + L-phenylalanine + ATP = L-phenylalanyl-tRNA(Phe) + AMP + diphosphate + H(+). In Cytophaga hutchinsonii (strain ATCC 33406 / DSM 1761 / CIP 103989 / NBRC 15051 / NCIMB 9469 / D465), this protein is Phenylalanine--tRNA ligase alpha subunit.